Consider the following 259-residue polypeptide: NAD kinase (259 aa).

The active-site Proton acceptor is the Asp49. Residues 49–50, Arg54, 118–119, Asp148, Ala156, 159–164, and Ala183 each bind NAD(+); these read DG, NE, and TAYNYS.

This sequence belongs to the NAD kinase family. It depends on a divalent metal cation as a cofactor.

The protein localises to the cytoplasm. It catalyses the reaction NAD(+) + ATP = ADP + NADP(+) + H(+). Functionally, involved in the regulation of the intracellular balance of NAD and NADP, and is a key enzyme in the biosynthesis of NADP. Catalyzes specifically the phosphorylation on 2'-hydroxyl of the adenosine moiety of NAD to yield NADP. This chain is NAD kinase, found in Xylella fastidiosa (strain 9a5c).